The chain runs to 25 residues: ATP-dependent 6-phosphofructokinase 2 (25 aa).

Gly-11 contacts ATP.

It belongs to the phosphofructokinase type A (PFKA) family. ATP-dependent PFK group I subfamily. Prokaryotic clade 'B1' sub-subfamily. As to quaternary structure, homotetramer. Mg(2+) is required as a cofactor.

It is found in the cytoplasm. The catalysed reaction is beta-D-fructose 6-phosphate + ATP = beta-D-fructose 1,6-bisphosphate + ADP + H(+). It participates in carbohydrate degradation; glycolysis; D-glyceraldehyde 3-phosphate and glycerone phosphate from D-glucose: step 3/4. With respect to regulation, in contrast with PFK1 this enzyme is not affected by phosphoenolpyruvate. Its function is as follows. Catalyzes the phosphorylation of D-fructose 6-phosphate to fructose 1,6-bisphosphate by ATP, the first committing step of glycolysis. The protein is ATP-dependent 6-phosphofructokinase 2 (pfkA2) of Thermus thermophilus (strain ATCC 27634 / DSM 579 / HB8).